A 271-amino-acid chain; its full sequence is Formamidopyrimidine-DNA glycosylase (271 aa).

Pro-2 functions as the Schiff-base intermediate with DNA in the catalytic mechanism. The Proton donor role is filled by Glu-3. Lys-56 functions as the Proton donor; for beta-elimination activity in the catalytic mechanism. DNA contacts are provided by His-89, Arg-107, and Arg-151. The segment at 236-270 (MVYDRAGLPCRVCAAPIKSIRQGQRSSFYCATCQK) adopts an FPG-type zinc-finger fold. The Proton donor; for delta-elimination activity role is filled by Arg-260.

This sequence belongs to the FPG family. In terms of assembly, monomer. Requires Zn(2+) as cofactor.

It catalyses the reaction Hydrolysis of DNA containing ring-opened 7-methylguanine residues, releasing 2,6-diamino-4-hydroxy-5-(N-methyl)formamidopyrimidine.. It carries out the reaction 2'-deoxyribonucleotide-(2'-deoxyribose 5'-phosphate)-2'-deoxyribonucleotide-DNA = a 3'-end 2'-deoxyribonucleotide-(2,3-dehydro-2,3-deoxyribose 5'-phosphate)-DNA + a 5'-end 5'-phospho-2'-deoxyribonucleoside-DNA + H(+). In terms of biological role, involved in base excision repair of DNA damaged by oxidation or by mutagenic agents. Acts as a DNA glycosylase that recognizes and removes damaged bases. Has a preference for oxidized purines, such as 7,8-dihydro-8-oxoguanine (8-oxoG). Has AP (apurinic/apyrimidinic) lyase activity and introduces nicks in the DNA strand. Cleaves the DNA backbone by beta-delta elimination to generate a single-strand break at the site of the removed base with both 3'- and 5'-phosphates. The polypeptide is Formamidopyrimidine-DNA glycosylase (Polaromonas naphthalenivorans (strain CJ2)).